A 942-amino-acid chain; its full sequence is Replicase polyprotein P2AB (942 aa).

The next 2 helical transmembrane spans lie at 10-30 (KSVMLMSRMSWSKLALLISVA) and 41-61 (TLICMGILVSVVLNWIVCAVC). A Peptidase S39 domain is found at 129-326 (VENSRLQPLE…TVENSELYPD (198 aa)). Catalysis depends on for protease activity residues H176, D209, and S276. The residue at position 339 (T339) is a Phosphothreonine; by host. S390 carries the phosphoserine; by host modification. The RdRp catalytic domain occupies 691–805 (HPGAMADISG…GWVDDAPRKY (115 aa)). The tract at residues 888–917 (GNDGEERSSNESPATTKTQGSAAAWGPPQE) is disordered. Polar residues predominate over residues 897–908 (NESPATTKTQGS).

Post-translationally, the polyprotein is proteolytically cleaved into several chains by the viral protease.

Its subcellular location is the host membrane. It carries out the reaction RNA(n) + a ribonucleoside 5'-triphosphate = RNA(n+1) + diphosphate. Responsible for cleavage of polyprotein P2A and replicase polyprotein P2AB. Its function is as follows. Covalently attached to the 5' extremity of the genomic and subgenomic RNAs. It may serve as a primer for the replicase. In terms of biological role, replicates the viral genome. The protein is Replicase polyprotein P2AB of Dactylis glomerata (Orchard grass).